The chain runs to 173 residues: Cytochrome c-type biogenesis protein CcmE (173 aa).

Residues 1 to 8 (MNPRRKSR) lie on the Cytoplasmic side of the membrane. The chain crosses the membrane as a helical; Signal-anchor for type II membrane protein span at residues 9–29 (FKLVIFVVLGIAIASGLMLYA). The Periplasmic segment spans residues 30–173 (LRQNIDLFYT…RDRQEKEGAK (144 aa)). Positions 131 and 135 each coordinate heme. The segment at 152 to 173 (GIKAADLKGESARDRQEKEGAK) is disordered. The segment covering 156 to 173 (ADLKGESARDRQEKEGAK) has biased composition (basic and acidic residues).

It belongs to the CcmE/CycJ family.

The protein resides in the cell inner membrane. Its function is as follows. Heme chaperone required for the biogenesis of c-type cytochromes. Transiently binds heme delivered by CcmC and transfers the heme to apo-cytochromes in a process facilitated by CcmF and CcmH. This is Cytochrome c-type biogenesis protein CcmE from Haemophilus influenzae (strain PittEE).